The following is a 1083-amino-acid chain: Protein HOS4 (1083 aa).

Disordered stretches follow at residues 1–233 and 267–328; these read MNET…RKLV and SSLF…YRDS. Ser14 and Ser16 each carry phosphoserine. Residues 24–62 show a composition bias toward basic and acidic residues; sequence TRREELEKISKQETSEEEDTAGKHEQRETLSEEVSDKFP. Residue Thr37 is modified to Phosphothreonine. Phosphoserine is present on Ser67. A compositionally biased stretch (polar residues) spans 67 to 85; the sequence is SFRSQTTSVHQATQNNLNA. The span at 86–118 shows a compositional bias: basic and acidic residues; that stretch reads KESEDLAHKNDASSHEGEVNGDSRPDDVPETNE. Positions 135–149 are enriched in polar residues; it reads PNVRNVDIQNHQPFS. The segment covering 151 to 166 has biased composition (basic and acidic residues); it reads DQLRAMLKEPKRKTVD. Positions 167–185 are enriched in acidic residues; it reads DFIEEEGLGAVEEEDLSDE. The segment covering 186–207 has biased composition (basic and acidic residues); sequence VLEKNTTEPENVEKDIEYSDSD. A compositionally biased stretch (polar residues) spans 277–293; it reads VKETNNNLSNMNSSPAQ. At Ser290 the chain carries Phosphoserine. Positions 300 to 310 are enriched in low complexity; sequence VSRSNDSNKSS. Residues 314–323 are compositionally biased toward basic residues; sequence VSKRPKQKKG. 3 ANK repeats span residues 329–359, 363–392, and 398–427; these read GGRTRLQIACDKGKYDVVKKMIEEGGYDIND, AGNTALHEAALQGHIEIVELLIENGADVNI, and FGDTPLIDASANGHLDVVKYLLKNGADPTI. A disordered region spans residues 472 to 516; it reads AGIHNDKSKNGNNAHTIDQPPFDNTTKAKNEKAADSPSMASNIDE. Residues 481–496 show a composition bias toward polar residues; the sequence is NGNNAHTIDQPPFDNT. Phosphoserine is present on Ser507. ANK repeat units follow at residues 532 to 561 and 593 to 622; these read AGKEKLFKASKEGHLPYVGTYVENGGKIDL and NKTSALMVAVGRGHLGTVKLLLEAGADPTK. Disordered regions lie at residues 661-742 and 762-790; these read HSED…DDNE and DEEKLKSISPLSMEPHSPKKAKSVEISKI. The span at 665–675 shows a compositional bias: acidic residues; the sequence is NNDDDDDDDNN. At Ser698 the chain carries Phosphoserine. A Phosphothreonine modification is found at Thr700. Residues 721 to 740 show a composition bias toward basic and acidic residues; that stretch reads NNDRDVKESTTSDSRKRLDD. Phosphoserine is present on Ser778.

In terms of assembly, identified in the Set3C complex with HOS2, HST1, SNT1, SIF2, CPR1 and SET3.

Its function is as follows. Unknown. Component of the Set3C complex, which is required to repress early/middle sporulation genes during meiosis. This Saccharomyces cerevisiae (strain ATCC 204508 / S288c) (Baker's yeast) protein is Protein HOS4 (HOS4).